Consider the following 240-residue polypeptide: Cysteine-rich venom protein catrin (240 aa).

The signal sequence occupies residues 1–19 (MIAFIVLPILAAVLQQSSG). The 129-residue stretch at 38 to 166 (VDLHNFLRRS…KYSYFYVCQY (129 aa)) folds into the SCP domain. Cystine bridges form between cysteine 75–cysteine 153, cysteine 92–cysteine 167, cysteine 148–cysteine 164, cysteine 186–cysteine 193, cysteine 189–cysteine 198, cysteine 202–cysteine 235, cysteine 211–cysteine 229, and cysteine 220–cysteine 233. Positions 202 to 235 (CTKEDKYTNCKSLVQQAGCQDKQMQSDCPAICFC) constitute a ShKT domain.

The protein belongs to the CRISP family. As to expression, expressed by the venom gland.

It localises to the secreted. Catrin-2 weakly blocks contraction of smooth muscle elicited by high potassium-induced depolarization, but does not block caffeine-stimulated contraction. Catrin-1 has no significant effect. May target voltage-gated calcium channels on smooth muscle. The chain is Cysteine-rich venom protein catrin from Crotalus atrox (Western diamondback rattlesnake).